The following is a 366-amino-acid chain: Galactoside alpha-(1,2)-fucosyltransferase 1 (366 aa).

The Cytoplasmic portion of the chain corresponds to Met-1–His-8. Residues Leu-9 to Phe-25 traverse the membrane as a helical; Signal-anchor for type II membrane protein segment. The Lumenal segment spans residues Leu-26 to Pro-366. Residues Asn-66, Asn-302, and Asn-328 are each glycosylated (N-linked (GlcNAc...) asparagine).

The protein belongs to the glycosyltransferase 11 family.

It is found in the golgi apparatus. It localises to the golgi stack membrane. The catalysed reaction is a beta-D-galactosyl-(1-&gt;4)-N-acetyl-beta-D-glucosaminyl derivative + GDP-beta-L-fucose = an alpha-L-Fuc-(1-&gt;2)-beta-D-Gal-(1-&gt;4)-beta-D-GlcNAc derivative + GDP + H(+). It catalyses the reaction a ganglioside GA1 + GDP-beta-L-fucose = a ganglioside Fuc-GA1 + GDP + H(+). It carries out the reaction a beta-D-Gal-(1-&gt;3)-beta-D-GlcNAc-(1-&gt;3)-beta-D-Gal-(1-&gt;4)-beta-D-Glc-(1&lt;-&gt;1')-Cer(d18:1(4E)) + GDP-beta-L-fucose = alpha-L-fucosyl-(1-&gt;2)- beta-D-galactosyl-(1-&gt;3)-N-acetyl-beta-D-glucosaminyl-(1-&gt;3)-beta-D-galactosyl-(1-&gt;4)-beta-D-glucosyl-(1&lt;-&gt;1')-N-acylsphing-4-enine + GDP + H(+). The enzyme catalyses a neolactoside nLc4Cer(d18:1(4E)) + GDP-beta-L-fucose = a neolactoside IV(2)-alpha-Fuc-nLc4Cer(d18:1(4E)) + GDP + H(+). The catalysed reaction is a ganglioside GM1 + GDP-beta-L-fucose = a ganglioside Fuc-GM1 + GDP + H(+). It catalyses the reaction beta-D-galactosyl-(1-&gt;3)-N-acetyl-D-galactosamine + GDP-beta-L-fucose = alpha-L-fucosyl-(1-&gt;2)-beta-D-galactosyl-(1-&gt;3)-N-acetyl-D-galactosamine + GDP + H(+). Its pathway is protein modification; protein glycosylation. Catalyzes the transfer of L-fucose, from a guanosine diphosphate-beta-L-fucose, to the terminal galactose residue of glycoconjugates through an alpha(1,2) linkage leading to H antigen synthesis that is an intermediate substrate in the synthesis of ABO blood group antigens. H antigen is essential for maturation of the glomerular layer of the main olfactory bulb, in cell migration and early cell-cell contacts during tumor associated angiogenesis. Preferentially fucosylates soluble lactose and to a lesser extent fucosylates glycolipids gangliosides GA1 and GM1a. This is Galactoside alpha-(1,2)-fucosyltransferase 1 from Alouatta belzebul (Red-handed howler monkey).